The sequence spans 1012 residues: Structural polyprotein (1012 aa).

Asp-30 is an a divalent metal cation binding site. Residues 514-755 (ADKGYEVVAN…AGRQFHLALA (242 aa)) form the Peptidase S50 domain. The active-site Nucleophile is Ser-653. Lys-692 is a catalytic residue. Residues 972-1012 (MKHRNPRRAPPKPKPKPNAPSQRPPGRLGRWIRTVSDEDLE) are disordered. Basic residues predominate over residues 975–986 (RNPRRAPPKPKP). Positions 1003 to 1012 (IRTVSDEDLE) are interaction with VP1 protein.

As to quaternary structure, homotrimer. A central divalent metal stabilizes the VP2 trimer. Interacts with host ITGA4/ITGB1. Homodimer. Interacts (via C-terminus) with VP1 in the cytoplasm. Interacts with VP2. In terms of processing, specific enzymatic cleavages yield mature proteins. The capsid assembly seems to be regulated by polyprotein processing. The protease VP4 cleaves itself off the polyprotein, thus releasing pre-VP2 and VP3 within the infected cell. During capsid assembly, the C-terminus of pre-VP2 is further processed by VP4, giving rise to VP2, the external capsid protein and three small peptides that all stay closely associated with the capsid.

It localises to the virion. The protein localises to the host cytoplasm. In terms of biological role, capsid protein VP2 self assembles to form an icosahedral capsid with a T=13 symmetry, about 70 nm in diameter, and consisting of 260 VP2 trimers. The capsid encapsulates the genomic dsRNA. VP2 is also involved in attachment and entry into the host cell by interacting with host ITGA4/ITGB1. Functionally, the precursor of VP2 plays an important role in capsid assembly. First, pre-VP2 and VP2 oligomers assemble to form a procapsid. Then, the pre-VP2 intermediates may be processed into VP2 proteins by proteolytic cleavage mediated by VP4 to obtain the mature virion. The final capsid is composed of pentamers and hexamers but VP2 has a natural tendency to assemble into all-pentameric structures. Therefore pre-VP2 may be required to allow formation of the hexameric structures. Its function is as follows. Protease VP4 is a serine protease that cleaves the polyprotein into its final products. Pre-VP2 is first partially cleaved, and may be completely processed by VP4 upon capsid maturation. Capsid protein VP3 plays a key role in virion assembly by providing a scaffold for the capsid made of VP2. May self-assemble to form a T=4-like icosahedral inner-capsid composed of at least 180 trimers. Plays a role in genomic RNA packaging by recruiting VP1 into the capsid and interacting with the dsRNA genome segments to form a ribonucleoprotein complex. Additionally, the interaction of the VP3 C-terminal tail with VP1 removes the inherent structural blockade of the polymerase active site. Thus, VP3 can also function as a transcriptional activator. In terms of biological role, structural peptide 1 is a small peptide derived from pre-VP2 C-terminus. It destabilizes and perforates cell membranes, suggesting a role during entry. Functionally, structural peptide 2 is a small peptide derived from pVP2 C-terminus. It is not essential for the virus viability, but viral growth is affected when missing. Its function is as follows. Structural peptide 3 is a small peptide derived from pVP2 C-terminus. It is not essential for the virus viability, but viral growth is affected when missing. Structural peptide 4 is a small peptide derived from pVP2 C-terminus. It is essential for the virus viability. The polypeptide is Structural polyprotein (Gallus gallus (Chicken)).